The sequence spans 87 residues: Small ribosomal subunit protein bS20 (87 aa).

The tract at residues 1 to 27 (MANIKSAKKRAVQSEKRRKHNASRRSM) is disordered.

It belongs to the bacterial ribosomal protein bS20 family.

Functionally, binds directly to 16S ribosomal RNA. The protein is Small ribosomal subunit protein bS20 of Pectobacterium carotovorum subsp. carotovorum (strain PC1).